Consider the following 660-residue polypeptide: Probable Xaa-Pro aminopeptidase PTRG_10574 (660 aa).

Mn(2+) is bound by residues Asp-274, Asp-285, Glu-435, and Glu-476. A disordered region spans residues 641-660 (SAGSGSTPLWKPHNKQDKKN).

It belongs to the peptidase M24B family. It depends on Mn(2+) as a cofactor.

It carries out the reaction Release of any N-terminal amino acid, including proline, that is linked to proline, even from a dipeptide or tripeptide.. Its function is as follows. Catalyzes the removal of a penultimate prolyl residue from the N-termini of peptides. This chain is Probable Xaa-Pro aminopeptidase PTRG_10574, found in Pyrenophora tritici-repentis (strain Pt-1C-BFP) (Wheat tan spot fungus).